We begin with the raw amino-acid sequence, 491 residues long: GTPase Der (491 aa).

Positions P3–D166 constitute an EngA-type G 1 domain. GTP-binding positions include G9–S16, D56–I60, and N118–D121. The interval R164–S191 is disordered. Acidic residues predominate over residues D166–G181. The span at E182 to S191 shows a compositional bias: basic and acidic residues. The region spanning I196–V369 is the EngA-type G 2 domain. GTP-binding positions include G202–S209, D249–V253, and N314–D317. The KH-like domain occupies T370 to D454. Residues G452–L464 are compositionally biased toward basic and acidic residues. The interval G452 to R491 is disordered. The span at N470 to R491 shows a compositional bias: basic residues.

The protein belongs to the TRAFAC class TrmE-Era-EngA-EngB-Septin-like GTPase superfamily. EngA (Der) GTPase family. In terms of assembly, associates with the 50S ribosomal subunit.

Functionally, GTPase that plays an essential role in the late steps of ribosome biogenesis. The sequence is that of GTPase Der from Azotobacter vinelandii (strain DJ / ATCC BAA-1303).